A 283-amino-acid chain; its full sequence is Phosphatidylglycerol--prolipoprotein diacylglyceryl transferase (283 aa).

The next 4 membrane-spanning stretches (helical) occupy residues 17-37 (LAVRWYALSYILGFILFTFLG), 56-76 (FLTWGILGVILGGRLGYVLFY), 92-112 (WEGGMSFHGGFLGVVIAIWLF), and 117-137 (GIGFLKLMDTVAPLVPLGLAS). Position 139 (Arg139) interacts with a 1,2-diacyl-sn-glycero-3-phospho-(1'-sn-glycerol). A run of 3 helical transmembrane segments spans residues 194 to 214 (PSQLYQFALEGICLFAVVWLF), 222 to 242 (GQVASLFLGGYGIFRFIAEFA), and 255 to 275 (GLSMGQWLSVPMIVLGIVGFV).

Belongs to the Lgt family.

The protein localises to the cell inner membrane. The catalysed reaction is L-cysteinyl-[prolipoprotein] + a 1,2-diacyl-sn-glycero-3-phospho-(1'-sn-glycerol) = an S-1,2-diacyl-sn-glyceryl-L-cysteinyl-[prolipoprotein] + sn-glycerol 1-phosphate + H(+). Its pathway is protein modification; lipoprotein biosynthesis (diacylglyceryl transfer). Catalyzes the transfer of the diacylglyceryl group from phosphatidylglycerol to the sulfhydryl group of the N-terminal cysteine of a prolipoprotein, the first step in the formation of mature lipoproteins. The polypeptide is Phosphatidylglycerol--prolipoprotein diacylglyceryl transferase (Neisseria meningitidis serogroup C / serotype 2a (strain ATCC 700532 / DSM 15464 / FAM18)).